The chain runs to 452 residues: MALKVIKISRVSPATASVDPLIVPLSFFDLQWLKLNPTEQVFFYKLTESSSSRDVFYSSILPKLERSLSLILTHFRLFTGHLKWDSQDPKPHLVVLSGDTLSLTVAETDADFSRISGRGLRPELELRPLIPELPIYSDSGAVVSLQVTLFPKQGFCIGTTAHHVVLDGKTAEKFNKAWAHTCKHGTIPKILPTVLDRSVVNVPAGLEQKMLELLPYLTEDDKENGRTLKLPPVKEINAKDNVLRITIEISPENIEKLKERAKKESTRAELHLSTFVVTFAHVWTCMVKARSGDPNRPVRFMYAADFRNRLEPPVPVTYFGTCVLAMDFYKYKAKEFMGEDGFVNTVEILSDSVKRLASQGVESTWKVYEEGTKTMKWGTQLLVVNGSNQIGMYETDFGWGRPIHTETMSIYKNDEFSMSKRRDGIGGVEIGISLKKLEMDTFLSLFYKWIGN.

Residues histidine 163 and aspartate 396 each act as proton acceptor in the active site.

This sequence belongs to the plant acyltransferase family.

The catalysed reaction is 4-coumaroyl-CoA + agmatine = N-(4-guanidinobutyl)-4-hydroxycinnamamide + CoA + H(+). Involved in the biosynthesis of hydroxycinnamic acid amides, which play a role in defense against pathogens. Agmatine is the preferred acyl acceptor, lower activity is observed towards putrescine. The preferred acyl donor is p-coumaroyl-CoA, lower activity is seen towards feruloyl-CoA. The chain is Agmatine coumaroyltransferase from Arabidopsis thaliana (Mouse-ear cress).